Here is a 230-residue protein sequence, read N- to C-terminus: Probable methylthioribulose-1-phosphate dehydratase (230 aa).

Cysteine 87 contacts substrate. Histidine 105 and histidine 107 together coordinate Zn(2+). The Proton donor/acceptor role is filled by glutamate 129. Histidine 185 provides a ligand contact to Zn(2+).

This sequence belongs to the aldolase class II family. MtnB subfamily. Zn(2+) serves as cofactor.

It is found in the cytoplasm. It carries out the reaction 5-(methylsulfanyl)-D-ribulose 1-phosphate = 5-methylsulfanyl-2,3-dioxopentyl phosphate + H2O. The protein operates within amino-acid biosynthesis; L-methionine biosynthesis via salvage pathway; L-methionine from S-methyl-5-thio-alpha-D-ribose 1-phosphate: step 2/6. Functionally, catalyzes the dehydration of methylthioribulose-1-phosphate (MTRu-1-P) into 2,3-diketo-5-methylthiopentyl-1-phosphate (DK-MTP-1-P). The protein is Probable methylthioribulose-1-phosphate dehydratase of Drosophila grimshawi (Hawaiian fruit fly).